The chain runs to 818 residues: Glycerol-3-phosphate acyltransferase (818 aa).

Positions C305 to M310 match the HXXXXD motif motif.

The protein belongs to the GPAT/DAPAT family.

It is found in the cell inner membrane. It carries out the reaction sn-glycerol 3-phosphate + an acyl-CoA = a 1-acyl-sn-glycero-3-phosphate + CoA. The protein operates within phospholipid metabolism; CDP-diacylglycerol biosynthesis; CDP-diacylglycerol from sn-glycerol 3-phosphate: step 1/3. In Edwardsiella ictaluri (strain 93-146), this protein is Glycerol-3-phosphate acyltransferase.